A 91-amino-acid polypeptide reads, in one-letter code: uncharacterized protein (91 aa).

Residues 71 to 91 form a disordered region; sequence NRENNSRSSVKQIINQETEEE. A compositionally biased stretch (polar residues) spans 76-91; it reads SRSSVKQIINQETEEE.

This is an uncharacterized protein from Bacillus subtilis (strain 168).